We begin with the raw amino-acid sequence, 282 residues long: Bifunctional protein FolD (282 aa).

Residues G166–S168 and I232 each bind NADP(+).

Belongs to the tetrahydrofolate dehydrogenase/cyclohydrolase family. As to quaternary structure, homodimer.

The enzyme catalyses (6R)-5,10-methylene-5,6,7,8-tetrahydrofolate + NADP(+) = (6R)-5,10-methenyltetrahydrofolate + NADPH. It carries out the reaction (6R)-5,10-methenyltetrahydrofolate + H2O = (6R)-10-formyltetrahydrofolate + H(+). Its pathway is one-carbon metabolism; tetrahydrofolate interconversion. In terms of biological role, catalyzes the oxidation of 5,10-methylenetetrahydrofolate to 5,10-methenyltetrahydrofolate and then the hydrolysis of 5,10-methenyltetrahydrofolate to 10-formyltetrahydrofolate. In Haemophilus influenzae (strain PittGG), this protein is Bifunctional protein FolD.